A 642-amino-acid chain; its full sequence is Sterol O-acyltransferase 2 (642 aa).

Positions lysine 174–valine 194 are disordered. A phosphoserine mark is found at serine 175 and serine 176. The next 5 helical transmembrane spans lie at phenylalanine 215–isoleucine 235, threonine 292–threonine 312, isoleucine 404–tyrosine 424, isoleucine 442–methionine 462, and leucine 485–tryptophan 505. Residues phenylalanine 523–asparagine 529 carry the FYXDWWN motif motif. 2 helical membrane passes run alanine 567–phenylalanine 587 and valine 622–phenylalanine 642. The active site involves histidine 579.

The protein belongs to the membrane-bound acyltransferase family. Sterol o-acyltransferase subfamily.

Its subcellular location is the endoplasmic reticulum membrane. It catalyses the reaction ergosterol + an acyl-CoA = ergosteryl ester + CoA. The catalysed reaction is zymosterol + an acyl-CoA = zymosterol ester + CoA. Its function is as follows. Sterol O-acyltransferase that catalyzes the formation of stery esters. The chain is Sterol O-acyltransferase 2 from Saccharomyces cerevisiae (strain ATCC 204508 / S288c) (Baker's yeast).